The chain runs to 277 residues: Transcription factor WRKY19 (277 aa).

Positions 100–168 (QDTASLDDGL…YLGDHTCGQA (69 aa)) form a DNA-binding region, WRKY.

The protein belongs to the WRKY group III family.

It localises to the nucleus. In terms of biological role, may play a role in defense responses. The sequence is that of Transcription factor WRKY19 from Oryza sativa subsp. japonica (Rice).